Reading from the N-terminus, the 286-residue chain is Protein HEXIM2 (286 aa).

Residues 1–11 (MMATPNQTACN) are compositionally biased toward polar residues. The tract at residues 1–195 (MMATPNQTAC…GEFQRKDFSE (195 aa)) is disordered. S29 is modified (phosphoserine). T32 carries the phosphothreonine modification. S39 bears the Phosphoserine mark. Phosphothreonine is present on T46. S51, S53, S71, S76, and S81 each carry phosphoserine. A compositionally biased stretch (polar residues) spans 68–78 (NSRSPRTQSPG). Over residues 87 to 103 (ARKKHRRRPSKRKRHWR) the composition is skewed to basic residues. The span at 113–132 (KQQRDERQSQRASRVREEMF) shows a compositional bias: basic and acidic residues. The interval 140–143 (PYNT) is interaction with P-TEFb. Residues 178-195 (SDGRGRAHGEFQRKDFSE) show a composition bias toward basic and acidic residues. Residues 207–277 (GRSKQELVRD…QENQMWNREG (71 aa)) adopt a coiled-coil conformation. An interaction with CCNT1, HEXIM1 and HEXIM2 region spans residues 226–286 (QAEEETRRLQ…GCRCDEEPGT (61 aa)).

Belongs to the HEXIM family. In terms of assembly, homooligomer and heterooligomer with HEXIM1; probably dimeric. Core component of the 7SK RNP complex, at least composed of 7SK RNA, LARP7, MEPCE, HEXIM1 (or HEXIM2) and P-TEFb (composed of CDK9 and CCNT1/cyclin-T1). Interacts with CCNT2. Ubiquitously expressed with higher expression in testis. HEXIM1 and HEXIM2 are differentially expressed.

The protein resides in the nucleus. Its function is as follows. Transcriptional regulator which functions as a general RNA polymerase II transcription inhibitor. Core component of the 7SK RNP complex: in cooperation with 7SK snRNA sequesters P-TEFb in a large inactive 7SK snRNP complex preventing RNA polymerase II phosphorylation and subsequent transcriptional elongation. The chain is Protein HEXIM2 (HEXIM2) from Homo sapiens (Human).